A 98-amino-acid polypeptide reads, in one-letter code: Small proline-rich protein 2B (98 aa).

Tandem repeats lie at residues 21–29 (PKCPEPCPP), 30–38 (PKCPEPCPP), 39–47 (PVCCEPCPP), 48–56 (PKCPEPCPP), and 57–65 (PVCCEPCPP). The segment at 21-65 (PKCPEPCPPPKCPEPCPPPVCCEPCPPPKCPEPCPPPVCCEPCPP) is 5 X 9 AA approximate tandem repeats.

This sequence belongs to the cornifin (SPRR) family. Expressed in uterus.

It is found in the cytoplasm. Its function is as follows. Cross-linked envelope protein of keratinocytes. It is a keratinocyte protein that first appears in the cell cytosol, but ultimately becomes cross-linked to membrane proteins by transglutaminase. All that results in the formation of an insoluble envelope beneath the plasma membrane. This Mus musculus (Mouse) protein is Small proline-rich protein 2B (Sprr2b).